The primary structure comprises 210 residues: Two-component response regulator ORR7 (210 aa).

The segment at Val53 to Tyr92 is disordered. The span at Ser61–Ala88 shows a compositional bias: acidic residues. The Response regulatory domain maps to Tyr92–Thr205. Asp142 is modified (4-aspartylphosphate).

This sequence belongs to the ARR family. Type-A subfamily. Two-component system major event consists of a His-to-Asp phosphorelay between a sensor histidine kinase (HK) and a response regulator (RR). In plants, the His-to-Asp phosphorelay involves an additional intermediate named Histidine-containing phosphotransfer protein (HPt). This multistep phosphorelay consists of a His-Asp-His-Asp sequential transfer of a phosphate group between first a His and an Asp of the HK protein, followed by the transfer to a conserved His of the HPt protein and finally the transfer to an Asp in the receiver domain of the RR protein.

Functionally, functions as a response regulator involved in His-to-Asp phosphorelay signal transduction system. Phosphorylation of the Asp residue in the receiver domain activates the ability of the protein to promote the transcription of target genes. Type-A response regulators seem to act as negative regulators of the cytokinin signaling. In Oryza sativa subsp. japonica (Rice), this protein is Two-component response regulator ORR7.